The following is a 403-amino-acid chain: S-adenosylmethionine synthase (403 aa).

An ATP-binding site is contributed by H16. D18 lines the Mg(2+) pocket. E44 contacts K(+). L-methionine is bound by residues E57 and Q100. The flexible loop stretch occupies residues 100–110 (QSNDIAQGVDH). Residues 167–169 (DAK), 238–239 (RF), D247, 253–254 (RK), A270, and K274 each bind ATP. D247 serves as a coordination point for L-methionine. K278 is an L-methionine binding site.

Belongs to the AdoMet synthase family. In terms of assembly, homotetramer; dimer of dimers. Mg(2+) serves as cofactor. The cofactor is K(+).

It is found in the cytoplasm. The catalysed reaction is L-methionine + ATP + H2O = S-adenosyl-L-methionine + phosphate + diphosphate. Its pathway is amino-acid biosynthesis; S-adenosyl-L-methionine biosynthesis; S-adenosyl-L-methionine from L-methionine: step 1/1. Catalyzes the formation of S-adenosylmethionine (AdoMet) from methionine and ATP. The overall synthetic reaction is composed of two sequential steps, AdoMet formation and the subsequent tripolyphosphate hydrolysis which occurs prior to release of AdoMet from the enzyme. This chain is S-adenosylmethionine synthase, found in Verminephrobacter eiseniae (strain EF01-2).